The following is a 280-amino-acid chain: Phosphatidylglycerol--prolipoprotein diacylglyceryl transferase (280 aa).

4 consecutive transmembrane segments (helical) span residues Leu26 to Ala46, Phe71 to Tyr91, Ile106 to Leu126, and Gly132 to Phe152. Residue Arg154 coordinates a 1,2-diacyl-sn-glycero-3-phospho-(1'-sn-glycerol). Transmembrane regions (helical) follow at residues Gly193–Leu213, Gly217–Phe237, and Trp251–Leu271.

This sequence belongs to the Lgt family.

The protein resides in the cell inner membrane. It carries out the reaction L-cysteinyl-[prolipoprotein] + a 1,2-diacyl-sn-glycero-3-phospho-(1'-sn-glycerol) = an S-1,2-diacyl-sn-glyceryl-L-cysteinyl-[prolipoprotein] + sn-glycerol 1-phosphate + H(+). It participates in protein modification; lipoprotein biosynthesis (diacylglyceryl transfer). In terms of biological role, catalyzes the transfer of the diacylglyceryl group from phosphatidylglycerol to the sulfhydryl group of the N-terminal cysteine of a prolipoprotein, the first step in the formation of mature lipoproteins. In Agrobacterium fabrum (strain C58 / ATCC 33970) (Agrobacterium tumefaciens (strain C58)), this protein is Phosphatidylglycerol--prolipoprotein diacylglyceryl transferase.